The following is a 204-amino-acid chain: Thiamine-phosphate synthase (204 aa).

4-amino-2-methyl-5-(diphosphooxymethyl)pyrimidine is bound by residues 35–39 (QVREK) and N67. Mg(2+)-binding residues include D68 and D87. Position 106 (S106) interacts with 4-amino-2-methyl-5-(diphosphooxymethyl)pyrimidine. A 2-[(2R,5Z)-2-carboxy-4-methylthiazol-5(2H)-ylidene]ethyl phosphate-binding site is contributed by 132-134 (TPT). 4-amino-2-methyl-5-(diphosphooxymethyl)pyrimidine is bound at residue K135. Residues G163 and 183-184 (VS) contribute to the 2-[(2R,5Z)-2-carboxy-4-methylthiazol-5(2H)-ylidene]ethyl phosphate site.

The protein belongs to the thiamine-phosphate synthase family. Mg(2+) serves as cofactor.

The enzyme catalyses 2-[(2R,5Z)-2-carboxy-4-methylthiazol-5(2H)-ylidene]ethyl phosphate + 4-amino-2-methyl-5-(diphosphooxymethyl)pyrimidine + 2 H(+) = thiamine phosphate + CO2 + diphosphate. The catalysed reaction is 2-(2-carboxy-4-methylthiazol-5-yl)ethyl phosphate + 4-amino-2-methyl-5-(diphosphooxymethyl)pyrimidine + 2 H(+) = thiamine phosphate + CO2 + diphosphate. It carries out the reaction 4-methyl-5-(2-phosphooxyethyl)-thiazole + 4-amino-2-methyl-5-(diphosphooxymethyl)pyrimidine + H(+) = thiamine phosphate + diphosphate. It participates in cofactor biosynthesis; thiamine diphosphate biosynthesis; thiamine phosphate from 4-amino-2-methyl-5-diphosphomethylpyrimidine and 4-methyl-5-(2-phosphoethyl)-thiazole: step 1/1. In terms of biological role, condenses 4-methyl-5-(beta-hydroxyethyl)thiazole monophosphate (THZ-P) and 2-methyl-4-amino-5-hydroxymethyl pyrimidine pyrophosphate (HMP-PP) to form thiamine monophosphate (TMP). This chain is Thiamine-phosphate synthase, found in Vibrio campbellii (strain ATCC BAA-1116).